We begin with the raw amino-acid sequence, 362 residues long: Serine/threonine-protein kinase SBK2 (362 aa).

Positions 1-11 (MPGKQSEDRPM) are enriched in basic and acidic residues. Residues 1 to 20 (MPGKQSEDRPMEVAAVEDGG) form a disordered region. The 269-residue stretch at 62–330 (YEEVRPLGQG…IKSYLGQPWK (269 aa)) folds into the Protein kinase domain. ATP-binding positions include 68–76 (LGQGRFGRV) and lysine 91. Aspartate 183 (proton acceptor) is an active-site residue. The segment at 317–362 (PVSSIKSYLGQPWKQREEGAEELTKELREDGSRGGQEAAKGEQPAC) is disordered. Over residues 330–348 (KQREEGAEELTKELREDGS) the composition is skewed to basic and acidic residues.

The protein belongs to the protein kinase superfamily. Ser/Thr protein kinase family. STKL subfamily.

It carries out the reaction L-seryl-[protein] + ATP = O-phospho-L-seryl-[protein] + ADP + H(+). It catalyses the reaction L-threonyl-[protein] + ATP = O-phospho-L-threonyl-[protein] + ADP + H(+). The protein is Serine/threonine-protein kinase SBK2 (Sbk2) of Rattus norvegicus (Rat).